The primary structure comprises 88 residues: Probable Fe(2+)-trafficking protein (88 aa).

The protein belongs to the Fe(2+)-trafficking protein family.

In terms of biological role, could be a mediator in iron transactions between iron acquisition and iron-requiring processes, such as synthesis and/or repair of Fe-S clusters in biosynthetic enzymes. This chain is Probable Fe(2+)-trafficking protein, found in Neisseria gonorrhoeae (strain ATCC 700825 / FA 1090).